Here is a 442-residue protein sequence, read N- to C-terminus: Histidine--tRNA ligase (442 aa).

The protein belongs to the class-II aminoacyl-tRNA synthetase family. Homodimer.

It localises to the cytoplasm. The enzyme catalyses tRNA(His) + L-histidine + ATP = L-histidyl-tRNA(His) + AMP + diphosphate + H(+). The chain is Histidine--tRNA ligase from Helicobacter pylori (strain G27).